Consider the following 347-residue polypeptide: NADH-ubiquinone oxidoreductase chain 2 (347 aa).

The next 9 membrane-spanning stretches (helical) occupy residues 3–23 (PPIL…VLMS), 25–45 (HWLM…PILM), 67–87 (SMLL…WAVL), 150–170 (NPHL…WGGL), 178–198 (ILAY…TYSP), 201–221 (MLLN…LFMF), 237–257 (LPLI…LPPL), 274–294 (NMII…YFYM), and 323–343 (MTML…TPMM).

It belongs to the complex I subunit 2 family. As to quaternary structure, core subunit of respiratory chain NADH dehydrogenase (Complex I) which is composed of 45 different subunits. Interacts with TMEM242.

Its subcellular location is the mitochondrion inner membrane. The catalysed reaction is a ubiquinone + NADH + 5 H(+)(in) = a ubiquinol + NAD(+) + 4 H(+)(out). Its function is as follows. Core subunit of the mitochondrial membrane respiratory chain NADH dehydrogenase (Complex I) which catalyzes electron transfer from NADH through the respiratory chain, using ubiquinone as an electron acceptor. Essential for the catalytic activity and assembly of complex I. The chain is NADH-ubiquinone oxidoreductase chain 2 from Mustela kathiah (Yellow-bellied weasel).